The sequence spans 386 residues: Succinate--CoA ligase [ADP-forming] subunit beta (386 aa).

Positions 9-244 (KEILRSYGVS…LDEEDPKEVE (236 aa)) constitute an ATP-grasp domain. ATP contacts are provided by residues K46, 53-55 (GRG), E99, C102, and E107. Residues N199 and D213 each coordinate Mg(2+). Substrate contacts are provided by residues N264 and 321-323 (GIM).

This sequence belongs to the succinate/malate CoA ligase beta subunit family. Heterotetramer of two alpha and two beta subunits. The cofactor is Mg(2+).

It catalyses the reaction succinate + ATP + CoA = succinyl-CoA + ADP + phosphate. It carries out the reaction GTP + succinate + CoA = succinyl-CoA + GDP + phosphate. Its pathway is carbohydrate metabolism; tricarboxylic acid cycle; succinate from succinyl-CoA (ligase route): step 1/1. Functionally, succinyl-CoA synthetase functions in the citric acid cycle (TCA), coupling the hydrolysis of succinyl-CoA to the synthesis of either ATP or GTP and thus represents the only step of substrate-level phosphorylation in the TCA. The beta subunit provides nucleotide specificity of the enzyme and binds the substrate succinate, while the binding sites for coenzyme A and phosphate are found in the alpha subunit. In Geobacillus kaustophilus (strain HTA426), this protein is Succinate--CoA ligase [ADP-forming] subunit beta.